We begin with the raw amino-acid sequence, 740 residues long: DNA polymerase iota (740 aa).

The interval 1–21 (MEKLGVEPEEEGGGDDDEEDA) is disordered. Residues 7 to 21 (EPEEEGGGDDDEEDA) are compositionally biased toward acidic residues. Positions 55–268 (IVHVDLDCFY…NHIKEIPGIG (214 aa)) constitute a UmuC domain. Mg(2+)-binding residues include Asp-59 and Leu-60. 2 residues coordinate Mn(2+): Asp-59 and Leu-60. Positions 64 and 96 each coordinate a 2'-deoxyribonucleoside 5'-triphosphate. Position 151 (Asp-151) interacts with Mg(2+). Asp-151 contributes to the Mn(2+) binding site. Glu-152 serves as the catalytic Proton acceptor. DNA-binding stretches follow at residues 249 to 314 (ESCQ…FGED) and 325 to 439 (QSFS…CNLK). The Ubiquitin-binding 1 (UBM1) motif lies at 527 to 544 (VDQEVFKQLPVDIQEEIL). Disordered stretches follow at residues 581 to 615 (PINPRDHLSSSKQVSSVSPCEPGTSGFNSSSSSYM) and 671 to 704 (NHTTDSHKQTVATDSHEGLTENREPDSVDEKITF). A compositionally biased stretch (low complexity) spans 605–615 (SGFNSSSSSYM). Over residues 672 to 702 (HTTDSHKQTVATDSHEGLTENREPDSVDEKI) the composition is skewed to basic and acidic residues. The Ubiquitin-binding 2 (UBM2) signature appears at 708–725 (IDPQVFYELPEAVQKELL).

This sequence belongs to the DNA polymerase type-Y family. Interacts with POLH. Interacts with REV1. Interacts with ubiquitin. Mg(2+) serves as cofactor. It depends on Mn(2+) as a cofactor. In terms of processing, monoubiquitinated. Protein monoubiquitination prevents POLI binding to ubiquitin via the ubiquitin-binding motif 1 and ubiquitin-binding motif 2. As to expression, ubiquitous. Highly expressed in testis.

It is found in the nucleus. The catalysed reaction is DNA(n) + a 2'-deoxyribonucleoside 5'-triphosphate = DNA(n+1) + diphosphate. Its function is as follows. Error-prone DNA polymerase specifically involved in DNA repair. Plays an important role in translesion synthesis, where the normal high-fidelity DNA polymerases cannot proceed and DNA synthesis stalls. Favors Hoogsteen base-pairing in the active site. Inserts the correct base with high-fidelity opposite an adenosine template. Exhibits low fidelity and efficiency opposite a thymidine template, where it will preferentially insert guanosine. May play a role in hypermutation of immunoglobulin genes. Forms a Schiff base with 5'-deoxyribose phosphate at abasic sites, but may not have lyase activity. This is DNA polymerase iota (POLI) from Homo sapiens (Human).